The primary structure comprises 56 residues: Turripeptide XIV-01 (56 aa).

Residues methionine 1–alanine 21 form the signal peptide. A propeptide spanning residues lysine 22–glutamate 30 is cleaved from the precursor.

Contains 2 disulfide bonds. Expressed by the venom duct.

Its subcellular location is the secreted. The chain is Turripeptide XIV-01 from Gemmula speciosa (Splendid gem-turris).